Here is a 161-residue protein sequence, read N- to C-terminus: UPF0225 protein GSU1048 (161 aa).

This sequence belongs to the UPF0225 family.

The sequence is that of UPF0225 protein GSU1048 from Geobacter sulfurreducens (strain ATCC 51573 / DSM 12127 / PCA).